Reading from the N-terminus, the 137-residue chain is Fluoride-specific ion channel FluC 1 (137 aa).

Transmembrane regions (helical) follow at residues 4-24 (LIYI…YYLG), 37-57 (LATL…TTYI), 67-87 (VITG…TFSV), and 100-120 (IAFL…GLGY). Na(+) contacts are provided by G77 and T80.

Belongs to the fluoride channel Fluc/FEX (TC 1.A.43) family.

The protein resides in the cell membrane. The enzyme catalyses fluoride(in) = fluoride(out). With respect to regulation, na(+) is not transported, but it plays an essential structural role and its presence is essential for fluoride channel function. In terms of biological role, fluoride-specific ion channel. Important for reducing fluoride concentration in the cell, thus reducing its toxicity. This chain is Fluoride-specific ion channel FluC 1, found in Bacillus thuringiensis subsp. konkukian (strain 97-27).